The primary structure comprises 156 residues: SsrA-binding protein (156 aa).

The segment at 131 to 156 (YDKRQTLREQQDKREALRVMRERNRG) is disordered.

The protein belongs to the SmpB family.

Its subcellular location is the cytoplasm. In terms of biological role, required for rescue of stalled ribosomes mediated by trans-translation. Binds to transfer-messenger RNA (tmRNA), required for stable association of tmRNA with ribosomes. tmRNA and SmpB together mimic tRNA shape, replacing the anticodon stem-loop with SmpB. tmRNA is encoded by the ssrA gene; the 2 termini fold to resemble tRNA(Ala) and it encodes a 'tag peptide', a short internal open reading frame. During trans-translation Ala-aminoacylated tmRNA acts like a tRNA, entering the A-site of stalled ribosomes, displacing the stalled mRNA. The ribosome then switches to translate the ORF on the tmRNA; the nascent peptide is terminated with the 'tag peptide' encoded by the tmRNA and targeted for degradation. The ribosome is freed to recommence translation, which seems to be the essential function of trans-translation. The chain is SsrA-binding protein from Arthrobacter sp. (strain FB24).